An 832-amino-acid chain; its full sequence is Ventricular zone-expressed PH domain-containing protein homolog 1 (832 aa).

The interval 201 to 319 (AELLALMSQL…RYLVSQLANM (119 aa)) is interaction with TGFBR1. Positions 497 to 519 (DTHGSQLRNSSASHPSIIHSEPE) are disordered. Residues 499-510 (HGSQLRNSSASH) show a composition bias toward polar residues. Positions 663–832 (ESTFPQQKDL…RESREVTTYL (170 aa)) are interaction with TGFBR1. The 103-residue stretch at 716–818 (QPLIEGKLKE…WLQCINVALA (103 aa)) folds into the PH domain.

This sequence belongs to the MELT/VEPH family. In terms of assembly, interacts with TGFBR1.

It is found in the cell membrane. Its function is as follows. Interacts with TGF-beta receptor type-1 (TGFBR1) and inhibits dissociation of activated SMAD2 from TGFBR1, impeding its nuclear accumulation and resulting in impaired TGF-beta signaling. May also affect FOXO, Hippo and Wnt signaling. The protein is Ventricular zone-expressed PH domain-containing protein homolog 1 (Veph1) of Rattus norvegicus (Rat).